The sequence spans 959 residues: E3 ubiquitin-protein ligase NEDD4-like (959 aa).

A C2 domain is found at 10-130; it reads PWHGVCVPVC…TEDPTMERPY (121 aa). Disordered regions lie at residues 183–206, 248–275, and 289–316; these read SNDSASQHQEELPPPPLPPGWEEK, AAHRRFRSRRHISEDLEPEPSEGGDVPE, and DSLGLALPPPPASPGSRTSPQELSEELS. Positions 197–230 constitute a WW 1 domain; it reads PPLPPGWEEKVDNLGRTYYVNHNNRTTQWHRPSL. Ser316 bears the Phosphoserine mark. Thr322 bears the Phosphothreonine mark. The residue at position 346 (Ser346) is a Phosphoserine; by WNK1 and WNK4. One can recognise a WW 2 domain in the interval 369–402; that stretch reads PGLPSGWEERKDAKGRTYYVNHNNRTTTWTRPIM. Residues 408–478 are disordered; that stretch reads GASGSATNSN…YNSPKPQHKV (71 aa). A Phosphoserine modification is found at Ser430. At Ser432 the chain carries Phosphoserine; by SGK1. Ser433 carries the phosphoserine; by WNK1 and WNK4 modification. Residues 444-455 show a composition bias toward basic and acidic residues; sequence GAKDSPVRRAVK. Ser448 carries the post-translational modification Phosphoserine; by SGK1. 4 positions are modified to phosphoserine: Ser459, Ser463, Ser467, and Ser471. WW domains follow at residues 481 to 514 and 532 to 565; these read SFLPPGWEMRIAPNGRPFFIDHNTKTTTWEDPRL and GPLPPGWEERIHLDGRTFYIDHNSKITQWEDPRL. The region spanning 624–958 is the HECT domain; sequence RPDVLKARLW…VENAQGFEGV (335 aa). The active-site Glycyl thioester intermediate is Cys926.

As to quaternary structure, interacts with UBE2E3. Interacts with NDFIP1; this interaction activates the E3 ubiquitin-protein ligase. Interacts with NDFIP2; this interaction activates the E3 ubiquitin-protein ligase. Interacts (via WW domains) with SCN1A. Interacts (via WW domains) with SCN2A. Interacts (via WW domains) with SCN3A. Interacts (via WW domains) with SCN5A. Interacts (via WW domains) with SCN8A. Interacts (via WW domains) with SCN9A. Interacts (via WW domains) with SCN10A. Interacts (via WW domains) with CLCN5. Interacts with SMAD2. Interacts with SMAD3. Interacts with SMAD6. Interacts with SMAD7. The phosphorylated form interacts with 14-3-3 proteins. Interacts with TNK2. Interacts with WNK1. Interacts with SGK1. Interacts (via C2 domain) with NPC2. Interacts with ARRDC4. Interacts with KCNQ1; promotes internalization of KCNQ1. Interacts (via domains WW1, 3 and 4) with USP36; the interaction inhibits ubiquitination of, at least, NTRK1, KCNQ2 and KCNQ3 by NEDD4L. Interacts with PRRG4 (via cytoplasmic domain). Interacts with LDLRAD3; the interaction is direct. Interacts with TTYH2 and TTYH3. Phosphorylated; which impairs interaction with SCNN. Interaction with YWHAH inhibits dephosphorylation. In terms of processing, auto-ubiquitinated.

Its subcellular location is the cytoplasm. The protein localises to the golgi apparatus. It localises to the endosome. The protein resides in the multivesicular body. The catalysed reaction is S-ubiquitinyl-[E2 ubiquitin-conjugating enzyme]-L-cysteine + [acceptor protein]-L-lysine = [E2 ubiquitin-conjugating enzyme]-L-cysteine + N(6)-ubiquitinyl-[acceptor protein]-L-lysine.. Its pathway is protein modification; protein ubiquitination. Activated by NDFIP1- and NDFIP2-binding. E3 ubiquitin-protein ligase which accepts ubiquitin from an E2 ubiquitin-conjugating enzyme in the form of a thioester and then directly transfers the ubiquitin to targeted substrates. Inhibits TGF-beta signaling by triggering SMAD2 and TGFBR1 ubiquitination and proteasome-dependent degradation. Promotes ubiquitination and internalization of various plasma membrane channels such as ENaC, Nav1.2, Nav1.3, Nav1.5, Nav1.7, Nav1.8, Kv1.3, KCNH2, EAAT1 or CLC5. Promotes ubiquitination and degradation of SGK1 and TNK2. Ubiquitinates BRAT1 and this ubiquitination is enhanced in the presence of NDFIP1. Plays a role in dendrite formation by melanocytes. Involved in the regulation of TOR signaling. Ubiquitinates TTYH2 and TTYH3 and regulates protein levels of TTYH2. The polypeptide is E3 ubiquitin-protein ligase NEDD4-like (NEDD4L) (Pongo abelii (Sumatran orangutan)).